A 506-amino-acid chain; its full sequence is Histidine ammonia-lyase (506 aa).

Positions 143–145 (ASG) form a cross-link, 5-imidazolinone (Ala-Gly). Position 144 is a 2,3-didehydroalanine (Ser) (S144).

Belongs to the PAL/histidase family. In terms of processing, contains an active site 4-methylidene-imidazol-5-one (MIO), which is formed autocatalytically by cyclization and dehydration of residues Ala-Ser-Gly.

The protein resides in the cytoplasm. The catalysed reaction is L-histidine = trans-urocanate + NH4(+). Its pathway is amino-acid degradation; L-histidine degradation into L-glutamate; N-formimidoyl-L-glutamate from L-histidine: step 1/3. The chain is Histidine ammonia-lyase from Salmonella typhimurium (strain LT2 / SGSC1412 / ATCC 700720).